A 243-amino-acid polypeptide reads, in one-letter code: 1-(5-phosphoribosyl)-5-[(5-phosphoribosylamino)methylideneamino] imidazole-4-carboxamide isomerase (243 aa).

The active-site Proton acceptor is Asp-8. Residue Asp-129 is the Proton donor of the active site.

It belongs to the HisA/HisF family.

The protein resides in the cytoplasm. The catalysed reaction is 1-(5-phospho-beta-D-ribosyl)-5-[(5-phospho-beta-D-ribosylamino)methylideneamino]imidazole-4-carboxamide = 5-[(5-phospho-1-deoxy-D-ribulos-1-ylimino)methylamino]-1-(5-phospho-beta-D-ribosyl)imidazole-4-carboxamide. The protein operates within amino-acid biosynthesis; L-histidine biosynthesis; L-histidine from 5-phospho-alpha-D-ribose 1-diphosphate: step 4/9. The chain is 1-(5-phosphoribosyl)-5-[(5-phosphoribosylamino)methylideneamino] imidazole-4-carboxamide isomerase from Brucella abortus (strain 2308).